We begin with the raw amino-acid sequence, 400 residues long: Nicotinate phosphoribosyltransferase (400 aa).

His-220 is subject to Phosphohistidine; by autocatalysis.

The protein belongs to the NAPRTase family. Transiently phosphorylated on a His residue during the reaction cycle. Phosphorylation strongly increases the affinity for substrates and increases the rate of nicotinate D-ribonucleotide production. Dephosphorylation regenerates the low-affinity form of the enzyme, leading to product release.

It catalyses the reaction nicotinate + 5-phospho-alpha-D-ribose 1-diphosphate + ATP + H2O = nicotinate beta-D-ribonucleotide + ADP + phosphate + diphosphate. It functions in the pathway cofactor biosynthesis; NAD(+) biosynthesis; nicotinate D-ribonucleotide from nicotinate: step 1/1. Catalyzes the synthesis of beta-nicotinate D-ribonucleotide from nicotinate and 5-phospho-D-ribose 1-phosphate at the expense of ATP. The sequence is that of Nicotinate phosphoribosyltransferase from Cronobacter sakazakii (strain ATCC BAA-894) (Enterobacter sakazakii).